The chain runs to 3412 residues: MSKKPGKPGRNRVVNMLKRGVSRVNPLTGLKRILGSLLDGRGPVRFILAILTFFRFTALQPTEALKRRWRAVDKRTALKHLNGFKRDLGSMLDTINRRPSKKRGGTRSLLGLAALIGLASSLQLSTYQGKVLMSINKTDAQSAINIPSANGANTCIVRALDVGVMCKNDITYLCPVLSAGNDPEDIDCWCDVEEVWVHYGRCTRMGHSRRSRRSISVQHHGDSTLATKNTPWLDTVKTTKYLTKVENWVLRNPGYALVALAIGWMLGSNNTQRVVFVIMLMLIAPAYSFNCLGTSNRDFVEGASGATWIDLVLEGGSCVTVMAPEKPTLDFKVMKMEATELATVREYCYEATLDTLSTVARCPTTGEAHNTKRSDPTFVCKRDVVDRGWGNGCGLFGKGSIDTCAKFTCKNKATGKTILRENIKYEVAIFVHGSTDSTSHGNYFEQIGKNQAARFTISPQAPSFTANMGEYGTVTIDCEARSGINTEDYYVFTVKEKSWLVNRDWFHDLNLPWTSPATTDWRNRETLVEFEEPHATKQTVVALGSQEGALHTALAGAIPATVSSSTLTLQSGHLKCRAKLDKVKIKGTTYGMCDSAFTFSKNPADTGHGTVIVELQYTGSNGPCRVPISVTANLMDLTPVGRLVTVNPFISTGGANNKVMIEVEPPFGDSYIVVGRGTTQINYHWHKEGSSIGKALATTWKGAQRLAVLGDTAWDFGSIGGVFNSIGKAVHQVFGGAFRTLFGGMSWITQGLLGALLLWMGLQARDRSISLTLLAVGGILIFLATSVQADSGCAIDLQRRELKCGGGIFVYNDVEKWKSDYKYFPLTPTGLAHVIQEAHANGICGIRSTSRLEHLMWENIQRELNAIFEDNEIDLSVVVQEDPKYYKRAPRRLKKLEDELDYGWKKWGKTLFVEPRLGNNTFVVDGPETKECPTANRAWNSFKVEDFGFGMVFTRLWLTIREENTTECDSAIIGTAIKGDRAVHSDLSYWIESKKNETWQLERAVMGEVKSCTWPETHTLWGDGVVESEMIIPVTLGGPKSHHNKRNGYHTQTKGPWSEGEITLDFDYCPGTTVTVTEHCGNRGASLRTTTASGKLVTDWCCRSCSLPPLRYTTKDGCWYGMEIRPVKEEEAKLVKSRVTAGVAGGMEPFQLGLLVAFIATQEVLKRRWTGKLTLTSLAVCLALLIFGNLTYMDLVRYLVLVGTAFAEMNTGGDVIHLALVAVFKVQPAFLAGLFLRMQWSNQENILMVIGAAFLQMAANDLKLEVLPILNAMSIAWMLIRAMKEGKVAMYALPILCALTPGMRMAGLDVIRCLLLIIGIVTLLNERRESVAKKKGGYLLAAALCQAGVCSPLIMMGGLILAHPNGKRSWPASEVLTGVGLMCALAGGLLEFEETSMVVPFAIAGLMYITYTVSGKAAEMWIEKAADITWEQNAEITGTSPRLDVDLDSHGNFKLLNDPGAPVHLFALRFILLGLSARFHWFIPFGVLGFWLLGKHSKRGGALWDVPSPKVYPKCETKPGIYRIMTRGILGTFQAGVGVMHEGVFHTMWHATEGAVLRNGEGRLDPYAGDVRNDLISYGGPWKLSATWDGTEEVQMIAVAPGKPAINVQTTPGVFKTPFGTIGAVTLDFPKGTSGSPIINKKGEIIGLYGNGVLIGQGEYVSGIIQGERTEEPIPDAYNEEMLRKRKLTVLELHPGAGKTRKVLPQIIKDCIQKRLRTAVLAPTRVVACEIAEALKGLPIRYLTPAVRNEHQGNEIVDVMCHATLTQKLLTPTRVPNYQVYIMDEAHFIDPASIAARGYISTKVELGEAAAIFMTATPPGTNDPFPDSNSPILDVEAQVPDKAWSTGYEWITNFTGRTVWFVPSVKSGNEIAICLQKAGKRVIQLNRKSFDTEYPKTKNNEWDFVVTTDISEMGANFGAHRVIDSRKCVKPVILEDDDRVILNGPMAITSASAAQRRGRIGRNPSQIGDEYHYGGATNEDDHDLANWTEAKILLDNIYLPNGLVAQMYQPERDKVFTMDGEFRLRGEERKNFVELMRNGDLPVWLAYKVASNGHSYQDRSWCFTGQTNNTILEDNNEVEVFTKTGDRKILRPKWMDARVCCDYQALKSFKEFAAGKRSALGMMEVMGRMPNHFWEKTVAAADTLYLLGTSEANSRAHKEALAELPDSLETLLLIGMLCVMSMGTFIFLMNRKGVGKMGLGAFVMTLATALLWAAEVPGTQIAGVLLIVFLLMIVLIPEPEKQRSQTDNQLAVFLICIMTLMGVVAANEMGLLEKTKSDIAKLFGSQPGSVGFATRTTPWDISLDIKPATAWALYAAATMVMTPLIKHLITTQYVNFSLTAIASQAGVLLGLTNGMPFTAMDLSVPLLVLGCWNQMTLPSLAVAVMLLAIHYAFMIPGWQAEAMRAAQRRTAAGIMKNAVVDGIVATDIPDLSPATPMTEKKMGQILLIAAAVLAVLVRPGICSIKEFGVLGSAALVTLIEGTAGVVWNCTTAVGLCNLMRGGWLAGMSITWTVYKNVDKPKGKRGGGKGATLGEIWKSRLNQLTRAEFMAYRKDGIVEVDRAPARKARREGRLTGGHPVSRGSAKLRWITERGFVKPMGKVVDLGCGRGGWSYYCATLKHVQEVKGFTKGGPGHEEPQLMQSYGWNLVHMKSGVDVFHKPAEPADTVLCDIGESNPSCEVEEARTARVLDMVEEWLKKGATEFCIKVLCPYTPKIIEKLEKLQRKYGGGLVRVPLSRNSTHEMYWVSGAAGNIIHAVSMTSQVLMGRMDKQNRSGPRYEEDVNLGSGTRSVGKLTEKPDLRKVGERIRRLREEYQQTWTYDHNNPYRTWNYHGSYEVKPTGSASSMVNGVVRLLSKPWDMITNVTTMAMTDTTPFGQQRVFKEKVDTKAPEPPLGVAQIMDVTTDWLWDFVAREKKPRVCTPEEFKAKVNSHAALGAMFEEQNQWSSAREAVEDPKFWEMVDEEREAHLKGECHTCIYNMMGKREKKTGEFGKAKGSRAIWYMWLGARFLEFEALGFLNEDHWMSRENSYGGVEGKGLQKLGYILQEISQIPGGKMYADDTAGWDTRITKEDLKNEAKITKRMEERHRKLAEAIIDLTYRHKVVKVMRPGPDGKTYMDVISREDQRGSGQVVTYALNTFTNLAVQLIRCMEAEGVVDEDDITRVRLGRLAKAVEWLRKNGPERLSRMAVSGDDCVVKPIDDRFATALHFLNNMSKIRKDIQEWKPSTGWHNWQEVPFCSHHFNELMLKDGRTIVVPCRSQDELIGRARISPGAGWNVKETACLSKSYAQMWLLMYFHRRDLRMMANAICSAVPVNWVPTGRTTWSIHGKGEWMTTEDMLSVWNRVWIEENEYMKDKTPLAAWNDIPYLGKREDIWCGSLIGTRTRATWAENIYAPIMQIRNLIGEEEYRDYM.

Residues 2-15 are interaction with host EXOC1; it reads SKKPGKPGRNRVVN. The Cytoplasmic segment spans residues 2–108; that stretch reads SKKPGKPGRN…PSKKRGGTRS (107 aa). Positions 37–72 are hydrophobic; homodimerization of capsid protein C; the sequence is LLDGRGPVRFILAILTFFRFTALQPTEALKRRWRAV. A propeptide spans 104-121 (ER anchor for the capsid protein C, removed in mature form by serine protease NS3); sequence GGTRSLLGLAALIGLASS. Residues 109–129 form a helical membrane-spanning segment; it reads LLGLAALIGLASSLQLSTYQG. Residues 130–247 lie on the Extracellular side of the membrane; sequence KVLMSINKTD…TTKYLTKVEN (118 aa). Asparagine 136 carries N-linked (GlcNAc...) asparagine; by host glycosylation. Residues 248-268 form a helical membrane-spanning segment; it reads WVLRNPGYALVALAIGWMLGS. Residues 269-273 lie on the Cytoplasmic side of the membrane; the sequence is NNTQR. The chain crosses the membrane as a helical span at residues 274–288; the sequence is VVFVIMLMLIAPAYS. The Extracellular segment spans residues 289 to 741; sequence FNCLGTSNRD…QVFGGAFRTL (453 aa). 8 cysteine pairs are disulfide-bonded: cysteine 291–cysteine 318, cysteine 348–cysteine 404, cysteine 348–cysteine 409, cysteine 362–cysteine 393, cysteine 380–cysteine 404, cysteine 380–cysteine 409, cysteine 478–cysteine 576, and cysteine 593–cysteine 624. Residues 386–399 are fusion peptide; the sequence is DRGWGNGCGLFGKG. Residues 742 to 762 traverse the membrane as a helical segment; sequence FGGMSWITQGLLGALLLWMGL. Topologically, residues 763-768 are cytoplasmic; sequence QARDRS. A helical transmembrane segment spans residues 769-789; that stretch reads ISLTLLAVGGILIFLATSVQA. The Extracellular segment spans residues 790–1214; sequence DSGCAIDLQR…AFAEMNTGGD (425 aa). Intrachain disulfides connect cysteine 793–cysteine 804 and cysteine 844–cysteine 932. 3 N-linked (GlcNAc...) asparagine; by host glycosylation sites follow: asparagine 919, asparagine 964, and asparagine 996. 6 disulfides stabilise this stretch: cysteine 968–cysteine 1012, cysteine 1069–cysteine 1118, cysteine 1080–cysteine 1101, cysteine 1080–cysteine 1102, cysteine 1101–cysteine 1105, and cysteine 1102–cysteine 1105. Residues 1215-1235 form a helical membrane-spanning segment; it reads VIHLALVAVFKVQPAFLAGLF. At 1236–1245 the chain is on the cytoplasmic side; the sequence is LRMQWSNQEN. Residues 1246-1266 traverse the membrane as a helical segment; sequence ILMVIGAAFLQMAANDLKLEV. The Lumenal segment spans residues 1267-1288; the sequence is LPILNAMSIAWMLIRAMKEGKV. A helical transmembrane segment spans residues 1289–1303; sequence AMYALPILCALTPGM. Arginine 1304 is a topological domain (cytoplasmic). The chain crosses the membrane as a helical span at residues 1305 to 1325; the sequence is MAGLDVIRCLLLIIGIVTLLN. Residues 1326-1339 are Lumenal-facing; the sequence is ERRESVAKKKGGYL. A helical membrane pass occupies residues 1340 to 1360; the sequence is LAAALCQAGVCSPLIMMGGLI. At 1361 to 1369 the chain is on the cytoplasmic side; sequence LAHPNGKRS. The chain crosses the membrane as a helical span at residues 1370–1390; sequence WPASEVLTGVGLMCALAGGLL. At 1391–1393 the chain is on the lumenal side; the sequence is EFE. A helical membrane pass occupies residues 1394 to 1414; that stretch reads ETSMVVPFAIAGLMYITYTVS. At 1415-1471 the chain is on the cytoplasmic side; it reads GKAAEMWIEKAADITWEQNAEITGTSPRLDVDLDSHGNFKLLNDPGAPVHLFALRFI. The interval 1422-1461 is interacts with and activates NS3 protease; sequence IEKAADITWEQNAEITGTSPRLDVDLDSHGNFKLLNDPGA. The segment at residues 1472–1492 is an intramembrane region (helical); that stretch reads LLGLSARFHWFIPFGVLGFWL. At 1493 to 2167 the chain is on the cytoplasmic side; that stretch reads LGKHSKRGGA…KEALAELPDS (675 aa). The Peptidase S7 domain maps to 1500-1677; sequence GGALWDVPSP…ERTEEPIPDA (178 aa). Residues histidine 1550, aspartate 1574, and serine 1634 each act as charge relay system; for serine protease NS3 activity in the active site. The Helicase ATP-binding domain occupies 1680-1836; that stretch reads EEMLRKRKLT…DSNSPILDVE (157 aa). Residues 1684-1687 form an important for RNA-binding region; that stretch reads RKRK. Residue 1693-1700 participates in ATP binding; it reads LHPGAGKT. A DEAH box motif is present at residues 1784–1787; it reads DEAH. Positions 1847-2011 constitute a Helicase C-terminal domain; the sequence is GYEWITNFTG…GLVAQMYQPE (165 aa). Residues 2162–2166 are regulates the ATPase activity of NS3 helicase; sequence AELPD. A helical membrane pass occupies residues 2168 to 2188; it reads LETLLLIGMLCVMSMGTFIFL. Topologically, residues 2189–2193 are lumenal; it reads MNRKG. An intramembrane region (helical) is located at residues 2194–2214; it reads VGKMGLGAFVMTLATALLWAA. Residue glutamate 2215 is a topological domain, lumenal. Residues 2216–2236 traverse the membrane as a helical segment; it reads VPGTQIAGVLLIVFLLMIVLI. The Cytoplasmic segment spans residues 2237–2251; sequence PEPEKQRSQTDNQLA. A helical transmembrane segment spans residues 2252 to 2266; sequence VFLICIMTLMGVVAA. Over 2267 to 2308 the chain is Lumenal; it reads NEMGLLEKTKSDIAKLFGSQPGSVGFATRTTPWDISLDIKPA. Positions 2309–2329 form an intramembrane region, helical; it reads TAWALYAAATMVMTPLIKHLI. Residues 2330–2376 lie on the Lumenal side of the membrane; the sequence is TTQYVNFSLTAIASQAGVLLGLTNGMPFTAMDLSVPLLVLGCWNQMT. Residues 2377–2397 traverse the membrane as a helical segment; that stretch reads LPSLAVAVMLLAIHYAFMIPG. Residues 2398–2440 lie on the Cytoplasmic side of the membrane; that stretch reads WQAEAMRAAQRRTAAGIMKNAVVDGIVATDIPDLSPATPMTEK. The chain crosses the membrane as a helical span at residues 2441–2461; that stretch reads KMGQILLIAAAVLAVLVRPGI. Over 2462-2466 the chain is Lumenal; sequence CSIKE. A helical transmembrane segment spans residues 2467 to 2487; that stretch reads FGVLGSAALVTLIEGTAGVVW. At 2488 to 3412 the chain is on the cytoplasmic side; the sequence is NCTTAVGLCN…IGEEEYRDYM (925 aa). Residues 2525-2790 form the mRNA cap 0-1 NS5-type MT domain; the sequence is GGGKGATLGE…DVNLGSGTRS (266 aa). Serine 2580 contacts S-adenosyl-L-methionine. Serine 2580 carries the phosphoserine modification. Lysine 2585 (for 2'-O-MTase activity) is an active-site residue. S-adenosyl-L-methionine-binding residues include glycine 2610, tryptophan 2611, threonine 2628, lysine 2629, aspartate 2655, and valine 2656. The active-site For 2'-O-MTase activity is aspartate 2670. Isoleucine 2671 serves as a coordination point for S-adenosyl-L-methionine. Catalysis depends on for 2'-O-MTase activity residues lysine 2706 and glutamate 2742. Position 2744 (tyrosine 2744) interacts with S-adenosyl-L-methionine. Residues 2771–2780 show a composition bias toward basic and acidic residues; the sequence is QNRSGPRYEE. The tract at residues 2771-2791 is disordered; it reads QNRSGPRYEEDVNLGSGTRSV. Residues glutamate 2964, histidine 2968, cysteine 2973, and cysteine 2976 each contribute to the Zn(2+) site. The RdRp catalytic domain occupies 3054–3206; sequence GKMYADDTAG…KPIDDRFATA (153 aa). Residues histidine 3241, cysteine 3257, and cysteine 3376 each coordinate Zn(2+).

In the N-terminal section; belongs to the class I-like SAM-binding methyltransferase superfamily. mRNA cap 0-1 NS5-type methyltransferase family. Homodimer. Interacts (via N-terminus) with host EXOC1 (via C-terminus); this interaction results in EXOC1 degradation through the proteasome degradation pathway. In terms of assembly, forms heterodimers with envelope protein E in the endoplasmic reticulum and Golgi. As to quaternary structure, homodimer; in the endoplasmic reticulum and Golgi. Interacts with protein prM. Interacts with non-structural protein 1. Homodimer; Homohexamer when secreted. Interacts with envelope protein E. NS1 interacts with NS4B. Interacts with host complement protein CFH; this interaction leads to the degradation of C3. In terms of assembly, interacts (via N-terminus) with serine protease NS3. As to quaternary structure, forms a heterodimer with serine protease NS3. May form homooligomers. Forms a heterodimer with NS2B. Interacts with non-structural protein 2A (via N-terminus). Interacts with NS4B. Interacts with unphosphorylated RNA-directed RNA polymerase NS5; this interaction stimulates RNA-directed RNA polymerase NS5 guanylyltransferase activity. In terms of assembly, interacts with serine protease NS3. As to quaternary structure, homodimer. Interacts with host STAT2; this interaction inhibits the phosphorylation of the latter, and, when all viral proteins are present (polyprotein), targets STAT2 for degradation. Interacts with serine protease NS3. Post-translationally, specific enzymatic cleavages in vivo yield mature proteins. Cleavages in the lumen of endoplasmic reticulum are performed by host signal peptidase, whereas cleavages in the cytoplasmic side are performed by serine protease NS3. Signal cleavage at the 2K-4B site requires a prior NS3 protease-mediated cleavage at the 4A-2K site. Cleaved in post-Golgi vesicles by a host furin, releasing the mature small envelope protein M, and peptide pr. This cleavage is incomplete as up to 30% of viral particles still carry uncleaved prM. In terms of processing, N-glycosylated. Post-translationally, N-glycosylated. The excreted form is glycosylated and this is required for efficient secretion of the protein from infected cells. Phosphorylated on serines residues. This phosphorylation may trigger NS5 nuclear localization.

The protein resides in the virion. It is found in the host nucleus. Its subcellular location is the host cytoplasm. It localises to the host perinuclear region. The protein localises to the secreted. The protein resides in the virion membrane. It is found in the host endoplasmic reticulum membrane. The enzyme catalyses Selective hydrolysis of -Xaa-Xaa-|-Yaa- bonds in which each of the Xaa can be either Arg or Lys and Yaa can be either Ser or Ala.. The catalysed reaction is RNA(n) + a ribonucleoside 5'-triphosphate = RNA(n+1) + diphosphate. It carries out the reaction a ribonucleoside 5'-triphosphate + H2O = a ribonucleoside 5'-diphosphate + phosphate + H(+). It catalyses the reaction ATP + H2O = ADP + phosphate + H(+). The enzyme catalyses a 5'-end (5'-triphosphoguanosine)-ribonucleoside in mRNA + S-adenosyl-L-methionine = a 5'-end (N(7)-methyl 5'-triphosphoguanosine)-ribonucleoside in mRNA + S-adenosyl-L-homocysteine. The catalysed reaction is a 5'-end (N(7)-methyl 5'-triphosphoguanosine)-ribonucleoside in mRNA + S-adenosyl-L-methionine = a 5'-end (N(7)-methyl 5'-triphosphoguanosine)-(2'-O-methyl-ribonucleoside) in mRNA + S-adenosyl-L-homocysteine + H(+). Plays a role in virus budding by binding to the cell membrane and gathering the viral RNA into a nucleocapsid that forms the core of a mature virus particle. During virus entry, may induce genome penetration into the host cytoplasm after hemifusion induced by the surface proteins. Can migrate to the cell nucleus where it modulates host functions. Overcomes the anti-viral effects of host EXOC1 by sequestering and degrading the latter through the proteasome degradation pathway. Functionally, inhibits RNA silencing by interfering with host Dicer. Its function is as follows. Prevents premature fusion activity of envelope proteins in trans-Golgi by binding to envelope protein E at pH6.0. After virion release in extracellular space, gets dissociated from E dimers. In terms of biological role, acts as a chaperone for envelope protein E during intracellular virion assembly by masking and inactivating envelope protein E fusion peptide. prM is the only viral peptide matured by host furin in the trans-Golgi network probably to avoid catastrophic activation of the viral fusion activity in acidic Golgi compartment prior to virion release. prM-E cleavage is inefficient, and many virions are only partially matured. These uncleaved prM would play a role in immune evasion. May play a role in virus budding. Exerts cytotoxic effects by activating a mitochondrial apoptotic pathway through M ectodomain. May display a viroporin activity. Functionally, binds to host cell surface receptor and mediates fusion between viral and cellular membranes. Envelope protein is synthesized in the endoplasmic reticulum in the form of heterodimer with protein prM. They play a role in virion budding in the ER, and the newly formed immature particle is covered with 60 spikes composed of heterodimer between precursor prM and envelope protein E. The virion is transported to the Golgi apparatus where the low pH causes dissociation of PrM-E heterodimers and formation of E homodimers. prM-E cleavage is inefficient, and many virions are only partially matured. These uncleaved prM would play a role in immune evasion. Its function is as follows. Involved in immune evasion, pathogenesis and viral replication. Once cleaved off the polyprotein, is targeted to three destinations: the viral replication cycle, the plasma membrane and the extracellular compartment. Essential for viral replication. Required for formation of the replication complex and recruitment of other non-structural proteins to the ER-derived membrane structures. Excreted as a hexameric lipoparticle that plays a role against host immune response. Antagonizing the complement function. Binds to the host macrophages and dendritic cells. Inhibits signal transduction originating from Toll-like receptor 3 (TLR3). In terms of biological role, component of the viral RNA replication complex that functions in virion assembly and antagonizes the host alpha/beta interferon antiviral response. Required cofactor for the serine protease function of NS3. May have membrane-destabilizing activity and form viroporins. Functionally, displays three enzymatic activities: serine protease, NTPase and RNA helicase. NS3 serine protease, in association with NS2B, performs its autocleavage and cleaves the polyprotein at dibasic sites in the cytoplasm: C-prM, NS2A-NS2B, NS2B-NS3, NS3-NS4A, NS4A-2K and NS4B-NS5. NS3 RNA helicase binds RNA and unwinds dsRNA in the 3' to 5' direction. Its function is as follows. Regulates the ATPase activity of the NS3 helicase activity. NS4A allows NS3 helicase to conserve energy during unwinding. In terms of biological role, functions as a signal peptide for NS4B and is required for the interferon antagonism activity of the latter. Induces the formation of ER-derived membrane vesicles where the viral replication takes place. Inhibits interferon (IFN)-induced host STAT1 phosphorylation and nuclear translocation, thereby preventing the establishment of cellular antiviral state by blocking the IFN-alpha/beta pathway. Inhibits STAT2 translocation in the nucleus after IFN-alpha treatment. Functionally, replicates the viral (+) and (-) RNA genome, and performs the capping of genomes in the cytoplasm. NS5 methylates viral RNA cap at guanine N-7 and ribose 2'-O positions. Besides its role in RNA genome replication, also prevents the establishment of cellular antiviral state by blocking the interferon-alpha/beta (IFN-alpha/beta) signaling pathway. Inhibits host TYK2 and STAT2 phosphorylation, thereby preventing activation of JAK-STAT signaling pathway. The protein is Genome polyprotein of Agelaius tricolor (Tricolored blackbird).